A 553-amino-acid polypeptide reads, in one-letter code: MSLSGASERSVPATKIEITVSCRNLLDLDTFSKSDPMVVLHTQSRASQEWREFGRTEVIDNTLNPDFVRKFVLDYFFEEKQNLRFDVYNVDSKANISKPKDFLGQAFLALGEVIGGQGSRVERPLTGVPGKKCGTILLTAEELSNCRDIATMQLCANKLDKKDFFGKSDPFLVFYRSNEDGTFTICHKTEVVKNTLNPVWQPFSIPVRALCNGDYDRTVKIDVYDWDRDGSHDFIGEFTTSYRELSKAQNQFTVYEVLNPRKKCKKKKYTNSGTVTLLSFSVDSEFTFVDYIKGGTQLNFTVAIDFTASNGNPLQPTSLHYMSPYQLSAYAMALKAVGEIIQDYDSDKLFPAYGFGAKLPPEGRISHQFPLNNNDEDPNCAGIEGVLESYFQSLRTVQLYGPTYFAPVINQVARAAAKISDGSQYYVLLIITDGVISDMTQTKEAIVSASSLPMSIIIVGVGPAMFEAMEELDGDDVRVSSRGRYAERDIVQFVPFRDYVDRSGNQVLSMARLAKDVLAEIPEQLLSYMRTRDIQPRPPPPVSPNPTPAPEQP.

2 C2 domains span residues Met1–Leu125 and Lys132–Tyr255. The Ca(2+) site is built by Asp163, Asp169, Asp225, Asp227, and Asp233. Positions Asn299 to Val500 constitute a VWFA domain. The disordered stretch occupies residues Thr531–Pro553. The segment covering Pro536–Pro553 has biased composition (pro residues).

Belongs to the copine family. The cofactor is Ca(2+).

In terms of biological role, probable calcium-dependent phospholipid-binding protein that may play a role in calcium-mediated intracellular processes. Plays a role in dendrite formation by melanocytes. This chain is Copine-9, found in Mus musculus (Mouse).